A 288-amino-acid polypeptide reads, in one-letter code: N-acetylneuraminate lyase (288 aa).

Aceneuramate contacts are provided by Ser-44 and Thr-45. The active-site Proton donor is Tyr-133. Lys-161 (schiff-base intermediate with substrate) is an active-site residue. 5 residues coordinate aceneuramate: Thr-163, Gly-185, Asp-187, Glu-188, and Ser-204.

Belongs to the DapA family. NanA subfamily. In terms of assembly, homotetramer.

It localises to the cytoplasm. The catalysed reaction is aceneuramate = aldehydo-N-acetyl-D-mannosamine + pyruvate. The protein operates within amino-sugar metabolism; N-acetylneuraminate degradation; D-fructose 6-phosphate from N-acetylneuraminate: step 1/5. Catalyzes the reversible aldol cleavage of N-acetylneuraminic acid (sialic acid; Neu5Ac) to form pyruvate and N-acetylmannosamine (ManNAc) via a Schiff base intermediate. This chain is N-acetylneuraminate lyase, found in Clostridium perfringens (strain SM101 / Type A).